The primary structure comprises 151 residues: MVNRHLASQGLAVKTESSVWAHSMRDCWTSVFGAGKNGELLWISIPVACHCEQCPVLLLPAALADVLSTSSRKFSNASSALLSPRADMVSAVIPGAPLMMLKKKELKDETKNKTACKHLCSCCPQSPLPGYCQLPGPTFPKDQPGHSEGQR.

It is found in the cytoplasm. Its subcellular location is the cytosol. This Homo sapiens (Human) protein is Protein InSETG-4 (InSet4-G).